The primary structure comprises 114 residues: Large ribosomal subunit protein uL22 (114 aa).

This sequence belongs to the universal ribosomal protein uL22 family. Part of the 50S ribosomal subunit.

Its function is as follows. This protein binds specifically to 23S rRNA; its binding is stimulated by other ribosomal proteins, e.g. L4, L17, and L20. It is important during the early stages of 50S assembly. It makes multiple contacts with different domains of the 23S rRNA in the assembled 50S subunit and ribosome. Functionally, the globular domain of the protein is located near the polypeptide exit tunnel on the outside of the subunit, while an extended beta-hairpin is found that lines the wall of the exit tunnel in the center of the 70S ribosome. The protein is Large ribosomal subunit protein uL22 of Streptococcus suis (strain 98HAH33).